Reading from the N-terminus, the 448-residue chain is SVP1-like protein 2 (448 aa).

Residues N61, N155, N256, N280, N315, and N421 are each glycosylated (N-linked (GlcNAc...) asparagine). WD repeat units lie at residues 222–262 (AHKN…LIKE) and 267–306 (VDKADIYEMSFSPNGSKLAVLSNKQTLHIFQIFETTNTET). A disordered region spans residues 416-435 (THYSLNESLRNEDTKSAGEP). A compositionally biased stretch (basic and acidic residues) spans 424–435 (LRNEDTKSAGEP).

The protein belongs to the WD repeat PROPPIN family. In terms of processing, N-glycosylated.

It localises to the endosome membrane. It is found in the prevacuolar compartment membrane. Functionally, involved in piecemeal microautophagy of the nucleus (micronucleophagy). The polypeptide is SVP1-like protein 2 (HSV2) (Saccharomyces cerevisiae (strain ATCC 204508 / S288c) (Baker's yeast)).